A 354-amino-acid polypeptide reads, in one-letter code: 4-hydroxy-2-oxovalerate aldolase 6 (354 aa).

One can recognise a Pyruvate carboxyltransferase domain in the interval 10-262 (VRIVDTTLRD…ATGLDVMATL (253 aa)). 18 to 19 (RD) lines the substrate pocket. A Mn(2+)-binding site is contributed by Asp-19. The active-site Proton acceptor is the His-22. Ser-172 and His-201 together coordinate substrate. Mn(2+) contacts are provided by His-201 and His-203. Tyr-292 is a substrate binding site.

It belongs to the 4-hydroxy-2-oxovalerate aldolase family.

It carries out the reaction (S)-4-hydroxy-2-oxopentanoate = acetaldehyde + pyruvate. The protein is 4-hydroxy-2-oxovalerate aldolase 6 of Rhodococcus jostii (strain RHA1).